We begin with the raw amino-acid sequence, 644 residues long: Protein DA1-related 6 (644 aa).

3 UIM domains span residues 119-138 (EEDE…NNRR), 181-200 (DVDE…KGKG), and 244-263 (DEDE…KGQI). One can recognise an LIM zinc-binding domain in the interval 284–355 (SLCGGCNFAV…YVCKEKKMKT (72 aa)). Residues 572–589 (ASSSASSSSRTPPAASAS) are compositionally biased toward low complexity. The segment at 572-591 (ASSSASSSSRTPPAASASKK) is disordered.

As to quaternary structure, interacts with ubiquitin.

In terms of biological role, ubiquitin receptor that probably regulates developmental process. This is Protein DA1-related 6 (DAR6) from Arabidopsis thaliana (Mouse-ear cress).